We begin with the raw amino-acid sequence, 939 residues long: MQKVRVHEIALELGIKSKEIIDKAKDLDLDLKTASSALPQEEAAELVNYILTGKSSRLKPAAPAAPMPKEEEISPAPQEESQMEPKEEPQKEVKESVKEAPESLPESPKEEAFEAEIPKESVKVTPKTLEQEPPKEELVSIEPSLESASETLSDSNPLPQEKTETKETIVATTLATQTDAEIQESEEKKETLAQATVQKRVGLRIVKKRSEEPAPKADRPSLEEARTPSRTAGLKTLQSLLGESDESEAALARKKKKEKKKPLPAPTKKNEQKIDLLGDRALETVSSFDDEQEEIVLFDLTIRDDINKEDEVAKKVDTDRIKVQRKTPFLDQGIRRVKRRKRRPQTVADKESISGTIEIPEEIRAYEFAEKTGKSIGEVIKVLFNLGLMITKNDFLDRDSIEILAEELELDVVIKNTSEALEYTSEEEEDEDEEGLEERPPVVTIMGHVDHGKTSLLDKIRNTKVAAGEAGGITQHIGAYTVEKDGKKISFIDTPGHEAFTEMRARGAEVTDIVIIVIAADDGVKQQTIEALNHAKAANVPIIIALNKVDKPDANPDKVKAEAADLGYSPLEWGGEYEFVHISAKTGEGIDHLLETILVQSELLELKANPEKAAKAVVIESSLEKGKGPVATVIVQSGTLKVGDSIVADTAYGRVRALIDDCGKNIQSIGPSEVAVVTGLSETPMAGAVLVSVENDSIAREYAEKRALYLRQKELSRSTKVSFDELSAMVAEGQLKSLPVIIKADTQGSLEAIRGSLEKLRNEEVKINIIHAGVGGITESDVVLAGASDNSVILGFNVRPTGSVKNRAKELGVEVKTYSIIYALLDDVRAVLGGMMSPVLEEENTGQAEVRETFTIAKVGTIAGCLVTDGSIQRGIKVRLIRNGVVVFTGNIASLKRFKDDAREVSKGYECGIMLEGFNDVQVGDVFETYKEVEKARKL.

The disordered stretch occupies residues 57–274; it reads RLKPAAPAAP…APTKKNEQKI (218 aa). 2 stretches are compositionally biased toward basic and acidic residues: residues 83–122 and 129–138; these read MEPK…KESV and LEQEPPKEEL. 2 stretches are compositionally biased toward polar residues: residues 146–158 and 170–180; these read ESAS…SNPL and VATTLATQTDA. Residues 208 to 227 show a composition bias toward basic and acidic residues; that stretch reads KRSEEPAPKADRPSLEEART. Over residues 252-262 the composition is skewed to basic residues; the sequence is ARKKKKEKKKP. Residues 438–607 enclose the tr-type G domain; that stretch reads ERPPVVTIMG…LVQSELLELK (170 aa). The interval 447–454 is G1; sequence GHVDHGKT. A GTP-binding site is contributed by 447–454; sequence GHVDHGKT. Residues 472–476 form a G2 region; sequence GITQH. The G3 stretch occupies residues 493 to 496; it reads DTPG. Residues 493-497 and 547-550 each bind GTP; these read DTPGH and NKVD. A G4 region spans residues 547–550; that stretch reads NKVD. A G5 region spans residues 583-585; sequence SAK.

The protein belongs to the TRAFAC class translation factor GTPase superfamily. Classic translation factor GTPase family. IF-2 subfamily.

Its subcellular location is the cytoplasm. In terms of biological role, one of the essential components for the initiation of protein synthesis. Protects formylmethionyl-tRNA from spontaneous hydrolysis and promotes its binding to the 30S ribosomal subunits. Also involved in the hydrolysis of GTP during the formation of the 70S ribosomal complex. The protein is Translation initiation factor IF-2 of Wolinella succinogenes (strain ATCC 29543 / DSM 1740 / CCUG 13145 / JCM 31913 / LMG 7466 / NCTC 11488 / FDC 602W) (Vibrio succinogenes).